A 259-amino-acid polypeptide reads, in one-letter code: Proteasome subunit alpha (259 aa).

Residues 233 to 243 (PAAPAAASESA) are compositionally biased toward low complexity. A disordered region spans residues 233–259 (PAAPAAASESAPEPKPDTETKPADPQD). Residues 244–259 (PEPKPDTETKPADPQD) are compositionally biased toward basic and acidic residues.

The protein belongs to the peptidase T1A family. The 20S proteasome core is composed of 14 alpha and 14 beta subunits that assemble into four stacked heptameric rings, resulting in a barrel-shaped structure. The two inner rings, each composed of seven catalytic beta subunits, are sandwiched by two outer rings, each composed of seven alpha subunits. The catalytic chamber with the active sites is on the inside of the barrel. Has a gated structure, the ends of the cylinder being occluded by the N-termini of the alpha-subunits. Is capped by the proteasome-associated ATPase, ARC.

The protein resides in the cytoplasm. It participates in protein degradation; proteasomal Pup-dependent pathway. With respect to regulation, the formation of the proteasomal ATPase ARC-20S proteasome complex, likely via the docking of the C-termini of ARC into the intersubunit pockets in the alpha-rings, may trigger opening of the gate for substrate entry. Interconversion between the open-gate and close-gate conformations leads to a dynamic regulation of the 20S proteasome proteolysis activity. Functionally, component of the proteasome core, a large protease complex with broad specificity involved in protein degradation. This chain is Proteasome subunit alpha, found in Rhodococcus opacus (strain B4).